Here is a 237-residue protein sequence, read N- to C-terminus: Small ribosomal subunit protein eS4 (237 aa).

The S4 RNA-binding domain occupies 38–110 (LPLAVVVRDV…EAKYYDLKPI (73 aa)).

This sequence belongs to the eukaryotic ribosomal protein eS4 family.

The protein is Small ribosomal subunit protein eS4 of Pyrobaculum calidifontis (strain DSM 21063 / JCM 11548 / VA1).